The sequence spans 218 residues: Glutathione S-transferase Mu 2 (218 aa).

Residues 2-88 (PMTLGYWDIR…YLARKHNLCG (87 aa)) enclose the GST N-terminal domain. Position 7 to 8 (7 to 8 (YW)) interacts with glutathione. Phosphoserine occurs at positions 27 and 44. Residues 43–46 (RSQW), Lys-50, 59–60 (NL), and 72–73 (QS) contribute to the glutathione site. The region spanning 90 to 208 (TEEERIRVDI…KSSRFLSKPI (119 aa)) is the GST C-terminal domain. Tyr-116 contacts substrate. Ser-117 is subject to Phosphoserine.

This sequence belongs to the GST superfamily. Mu family. As to quaternary structure, homodimer.

The protein resides in the cytoplasm. The catalysed reaction is RX + glutathione = an S-substituted glutathione + a halide anion + H(+). It carries out the reaction 11(S)-hydroxy-14(S),15(S)-epoxy-(5Z,8Z,12E)-eicosatrienoate + glutathione = (11S,15S)-dihydroxy-14(R)-S-glutathionyl-(5Z,8Z,12E)-eicosatrienoate. In terms of biological role, conjugation of reduced glutathione to a wide number of exogenous and endogenous hydrophobic electrophiles. Participates in the formation of novel hepoxilin regioisomers. In Mus musculus (Mouse), this protein is Glutathione S-transferase Mu 2.